The chain runs to 256 residues: Probable S-methyl-5'-thioinosine phosphorylase (256 aa).

Residues Thr10 and 47-48 (RH) each bind phosphate. A substrate-binding site is contributed by Met178. Thr179 lines the phosphate pocket. Residue 202-204 (NYA) coordinates substrate.

The protein belongs to the PNP/MTAP phosphorylase family. MTAP subfamily. Homotrimer.

It carries out the reaction S-methyl-5'-thioinosine + phosphate = 5-(methylsulfanyl)-alpha-D-ribose 1-phosphate + hypoxanthine. The protein operates within purine metabolism; purine nucleoside salvage. In terms of biological role, catalyzes the reversible phosphorylation of S-methyl-5'-thioinosine (MTI) to hypoxanthine and 5-methylthioribose-1-phosphate. Involved in the breakdown of S-methyl-5'-thioadenosine (MTA), a major by-product of polyamine biosynthesis. Catabolism of (MTA) occurs via deamination to MTI and phosphorolysis to hypoxanthine. This chain is Probable S-methyl-5'-thioinosine phosphorylase, found in Methanopyrus kandleri (strain AV19 / DSM 6324 / JCM 9639 / NBRC 100938).